A 609-amino-acid polypeptide reads, in one-letter code: Glutamine--fructose-6-phosphate aminotransferase [isomerizing] (609 aa).

The active-site Nucleophile; for GATase activity is the C2. One can recognise a Glutamine amidotransferase type-2 domain in the interval 2-217 (CGIVGAIAGR…DGDTAEIRRD (216 aa)). SIS domains are found at residues 285–425 (AESV…LRGA) and 458–599 (WAEC…VDKP). The active-site For Fru-6P isomerization activity is the K604.

In terms of assembly, homodimer.

The protein localises to the cytoplasm. The enzyme catalyses D-fructose 6-phosphate + L-glutamine = D-glucosamine 6-phosphate + L-glutamate. Catalyzes the first step in hexosamine metabolism, converting fructose-6P into glucosamine-6P using glutamine as a nitrogen source. This chain is Glutamine--fructose-6-phosphate aminotransferase [isomerizing], found in Xylella fastidiosa (strain 9a5c).